Consider the following 538-residue polypeptide: Phosphoenolpyruvate carboxykinase (ATP) (538 aa).

A substrate-binding site is contributed by Arg-64. Ca(2+) is bound by residues Asn-149 and Phe-151. Positions 206 and 212 each coordinate substrate. Residues Lys-212, His-231, and Gly-247–Thr-255 contribute to the ATP site. Mn(2+)-binding residues include Lys-212 and His-231. Position 268 (Asp-268) interacts with Mn(2+). ATP contacts are provided by residues Glu-296, Arg-332, Arg-447–Ile-448, and Thr-453. Arg-332 contributes to the substrate binding site.

The protein belongs to the phosphoenolpyruvate carboxykinase (ATP) family. As to quaternary structure, monomer. Mn(2+) is required as a cofactor.

It is found in the cytoplasm. It catalyses the reaction oxaloacetate + ATP = phosphoenolpyruvate + ADP + CO2. It participates in carbohydrate biosynthesis; gluconeogenesis. With respect to regulation, allosterically activated by calcium. Its function is as follows. Involved in the gluconeogenesis. Catalyzes the conversion of oxaloacetate (OAA) to phosphoenolpyruvate (PEP) through direct phosphoryl transfer between the nucleoside triphosphate and OAA. This Salmonella typhimurium (strain LT2 / SGSC1412 / ATCC 700720) protein is Phosphoenolpyruvate carboxykinase (ATP).